We begin with the raw amino-acid sequence, 74 residues long: Conotoxin Vt11.7 (74 aa).

An N-terminal signal peptide occupies residues 1 to 26; that stretch reads MMFRLTSVGCFLLVIVLLNVAVLTNA. Cystine bridges form between cysteine 28–cysteine 42, cysteine 35–cysteine 47, cysteine 41–cysteine 51, and cysteine 46–cysteine 55. Positions 62–74 are excised as a propeptide; sequence AHGHGLLRFWGQR.

Belongs to the conotoxin I2 superfamily. In terms of tissue distribution, expressed by the venom duct.

Its subcellular location is the secreted. The protein is Conotoxin Vt11.7 of Conus planorbis (Planorbis cone).